A 179-amino-acid polypeptide reads, in one-letter code: Cytochrome b6-f complex iron-sulfur subunit (179 aa).

The chain crosses the membrane as a helical span at residues L20–I42. In terms of domain architecture, Rieske spans G60–V161. [2Fe-2S] cluster-binding residues include C107, H109, C125, and H128. C112 and C127 are oxidised to a cystine.

This sequence belongs to the Rieske iron-sulfur protein family. In terms of assembly, the 4 large subunits of the cytochrome b6-f complex are cytochrome b6, subunit IV (17 kDa polypeptide, PetD), cytochrome f and the Rieske protein, while the 4 small subunits are PetG, PetL, PetM and PetN. The complex functions as a dimer. [2Fe-2S] cluster is required as a cofactor.

The protein localises to the cellular thylakoid membrane. It carries out the reaction 2 oxidized [plastocyanin] + a plastoquinol + 2 H(+)(in) = 2 reduced [plastocyanin] + a plastoquinone + 4 H(+)(out). Its function is as follows. Component of the cytochrome b6-f complex, which mediates electron transfer between photosystem II (PSII) and photosystem I (PSI), cyclic electron flow around PSI, and state transitions. The polypeptide is Cytochrome b6-f complex iron-sulfur subunit (Microcystis aeruginosa (strain NIES-843 / IAM M-2473)).